We begin with the raw amino-acid sequence, 320 residues long: 1,5-anhydro-D-fructose reductase (320 aa).

Residue Asp-35 coordinates NADP(+). The active-site Proton donor is the Tyr-40. His-102 is a binding site for substrate. NADP(+) contacts are provided by residues Gln-194 and 265 to 277 (IPGSITPSHIKEN).

It belongs to the aldo/keto reductase family. Monomer. Specifically expressed in testis. Expressed in testicular germ cells and testis interstitial cells.

Its subcellular location is the cytoplasm. It catalyses the reaction 1,5-anhydro-D-glucitol + NADP(+) = 1,5-anhydro-D-fructose + NADPH + H(+). Inhibited by p-chloromercuribenzoic acid and alkyliodines. Its function is as follows. Catalyzes the NADPH-dependent reduction of 1,5-anhydro-D-fructose (AF) to 1,5-anhydro-D-glucitol. Has low NADPH-dependent reductase activity towards 9,10-phenanthrenequinone (in vitro). This is 1,5-anhydro-D-fructose reductase (AKR1E2) from Homo sapiens (Human).